Here is an 840-residue protein sequence, read N- to C-terminus: Exocyst complex component 7 (840 aa).

Positions 1–112 are disordered; that stretch reads MSAPPRLSAR…ATSTTSPFSY (112 aa). Residues 19-31 show a composition bias toward polar residues; the sequence is SNAPSPTSPTGLK. 2 stretches are compositionally biased toward low complexity: residues 50–73 and 83–111; these read KSSV…TLPK and QQQQ…SPFS. Positions 193-227 form a coiled coil; it reads KNNATSELTEQDDQLENDKRDLQFIKEQLEKNNSM. The segment at 601 to 638 is disordered; it reads QDNNNSNSNSNAPSSTSSNSKSSSSSSSSSSSNSASST. Positions 603 to 637 are enriched in low complexity; that stretch reads NNNSNSNSNAPSSTSSNSKSSSSSSSSSSSNSASS.

This sequence belongs to the EXO70 family. In terms of assembly, the exocyst complex is composed of sec3/exoc1, sec5/exoc2, sec6/exoc3, sec8/exoc4, sec10/exoc5, sec15/exoc6, exo70/exoc7 and exo84/exoc8.

Its subcellular location is the cytoplasm. It localises to the cytosol. It is found in the cell membrane. The protein resides in the midbody. The protein localises to the midbody ring. In terms of biological role, component of the exocyst complex involved in the docking of exocytic vesicles with fusion sites on the plasma membrane. The polypeptide is Exocyst complex component 7 (exoc7) (Dictyostelium discoideum (Social amoeba)).